The primary structure comprises 273 residues: Light-independent protochlorophyllide reductase iron-sulfur ATP-binding protein (273 aa).

Residues 12-17 and lysine 41 each bind ATP; that span reads GIGKST. Mg(2+) is bound at residue serine 16. Residues cysteine 97 and cysteine 131 each contribute to the [4Fe-4S] cluster site. Residue 182-183 participates in ATP binding; it reads NR.

It belongs to the NifH/BchL/ChlL family. In terms of assembly, homodimer. Protochlorophyllide reductase is composed of three subunits; BchL, BchN and BchB. The cofactor is [4Fe-4S] cluster.

The enzyme catalyses chlorophyllide a + oxidized 2[4Fe-4S]-[ferredoxin] + 2 ADP + 2 phosphate = protochlorophyllide a + reduced 2[4Fe-4S]-[ferredoxin] + 2 ATP + 2 H2O. The protein operates within porphyrin-containing compound metabolism; bacteriochlorophyll biosynthesis (light-independent). In terms of biological role, component of the dark-operative protochlorophyllide reductase (DPOR) that uses Mg-ATP and reduced ferredoxin to reduce ring D of protochlorophyllide (Pchlide) to form chlorophyllide a (Chlide). This reaction is light-independent. The L component serves as a unique electron donor to the NB-component of the complex, and binds Mg-ATP. This Roseiflexus sp. (strain RS-1) protein is Light-independent protochlorophyllide reductase iron-sulfur ATP-binding protein.